The chain runs to 207 residues: Large ribosomal subunit protein uL4 (207 aa).

Residues 56-75 (EVSGTTKKPFKQKGTGNARQ) form a disordered region.

Belongs to the universal ribosomal protein uL4 family. In terms of assembly, part of the 50S ribosomal subunit.

Functionally, one of the primary rRNA binding proteins, this protein initially binds near the 5'-end of the 23S rRNA. It is important during the early stages of 50S assembly. It makes multiple contacts with different domains of the 23S rRNA in the assembled 50S subunit and ribosome. Forms part of the polypeptide exit tunnel. This chain is Large ribosomal subunit protein uL4, found in Rickettsia prowazekii (strain Madrid E).